A 402-amino-acid chain; its full sequence is Tyrosine-protein kinase transforming protein ros (402 aa).

The Protein kinase domain maps to 98-377 (LNLHKLLGSG…KLQEIRHSPL (280 aa)). ATP contacts are provided by residues 104–112 (LGSGAFGEV) and Lys-133. Residue Asp-232 is the Proton acceptor of the active site. Tyr-268 bears the Phosphotyrosine; by autocatalysis mark.

Belongs to the protein kinase superfamily. Tyr protein kinase family. Insulin receptor subfamily.

It catalyses the reaction L-tyrosyl-[protein] + ATP = O-phospho-L-tyrosyl-[protein] + ADP + H(+). This chain is Tyrosine-protein kinase transforming protein ros (V-ROS), found in Galliformes (UR2SV).